The sequence spans 429 residues: Putative GMP synthase [glutamine-hydrolyzing] (429 aa).

A Glutamine amidotransferase type-1 domain is found at 10 to 118 (TIFILDFGSQ…GYTPIHLYPC (109 aa)). The active-site Nucleophile is the C87. In terms of domain architecture, GMPS ATP-PPase spans 119 to 304 (ELFKHIVDCE…LGLSSYLLDR (186 aa)). Catalysis depends on residues H176 and E178.

Homodimer.

The catalysed reaction is XMP + L-glutamine + ATP + H2O = GMP + L-glutamate + AMP + diphosphate + 2 H(+). It functions in the pathway purine metabolism; GMP biosynthesis; GMP from XMP (L-Gln route): step 1/1. Functionally, catalyzes the synthesis of GMP from XMP. The polypeptide is Putative GMP synthase [glutamine-hydrolyzing] (guaA) (Chlamydia pneumoniae (Chlamydophila pneumoniae)).